A 239-amino-acid polypeptide reads, in one-letter code: Ribonuclease 3 (239 aa).

The RNase III domain maps to 18 to 141 (YLTLEKALGY…LMAGVYLEAG (124 aa)). Glutamate 54 provides a ligand contact to Mg(2+). Aspartate 58 is an active-site residue. 2 residues coordinate Mg(2+): serine 127 and glutamate 130. Residue glutamate 130 is part of the active site. Positions 168 to 237 (DYKTALQELT…AYQALQKLKE (70 aa)) constitute a DRBM domain.

Belongs to the ribonuclease III family. In terms of assembly, homodimer. Mg(2+) serves as cofactor.

It localises to the cytoplasm. It carries out the reaction Endonucleolytic cleavage to 5'-phosphomonoester.. In terms of biological role, digests double-stranded RNA. Involved in the processing of primary rRNA transcript to yield the immediate precursors to the large and small rRNAs (23S and 16S). Processes some mRNAs, and tRNAs when they are encoded in the rRNA operon. Processes pre-crRNA and tracrRNA of type II CRISPR loci if present in the organism. This is Ribonuclease 3 from Helicobacter pylori (strain P12).